We begin with the raw amino-acid sequence, 329 residues long: DNA-directed RNA polymerase subunit alpha (329 aa).

An alpha N-terminal domain (alpha-NTD) region spans residues 1–234 (MQGSVTEFLK…EQLDAFVELR (234 aa)). Positions 248-329 (FDPILLRPVD…WPPASLADDL (82 aa)) are alpha C-terminal domain (alpha-CTD).

This sequence belongs to the RNA polymerase alpha chain family. As to quaternary structure, homodimer. The RNAP catalytic core consists of 2 alpha, 1 beta, 1 beta' and 1 omega subunit. When a sigma factor is associated with the core the holoenzyme is formed, which can initiate transcription.

It catalyses the reaction RNA(n) + a ribonucleoside 5'-triphosphate = RNA(n+1) + diphosphate. DNA-dependent RNA polymerase catalyzes the transcription of DNA into RNA using the four ribonucleoside triphosphates as substrates. In Shewanella sp. (strain ANA-3), this protein is DNA-directed RNA polymerase subunit alpha.